The chain runs to 212 residues: Methylthioribulose-1-phosphate dehydratase (212 aa).

Zn(2+) is bound by residues H97 and H99.

It belongs to the aldolase class II family. MtnB subfamily. In terms of assembly, homotetramer. Zn(2+) is required as a cofactor.

The catalysed reaction is 5-(methylsulfanyl)-D-ribulose 1-phosphate = 5-methylsulfanyl-2,3-dioxopentyl phosphate + H2O. The protein operates within amino-acid biosynthesis; L-methionine biosynthesis via salvage pathway; L-methionine from S-methyl-5-thio-alpha-D-ribose 1-phosphate: step 2/6. In terms of biological role, catalyzes the dehydration of methylthioribulose-1-phosphate (MTRu-1-P) into 2,3-diketo-5-methylthiopentyl-1-phosphate (DK-MTP-1-P). The protein is Methylthioribulose-1-phosphate dehydratase of Bacillus cereus (strain ZK / E33L).